Here is a 186-residue protein sequence, read N- to C-terminus: ATP-dependent protease subunit HslV (186 aa).

Residue Thr14 is part of the active site. 3 residues coordinate Na(+): Ala168, Cys171, and Thr174.

This sequence belongs to the peptidase T1B family. HslV subfamily. In terms of assembly, a double ring-shaped homohexamer of HslV is capped on each side by a ring-shaped HslU homohexamer. The assembly of the HslU/HslV complex is dependent on binding of ATP.

The protein localises to the cytoplasm. The enzyme catalyses ATP-dependent cleavage of peptide bonds with broad specificity.. Its activity is regulated as follows. Allosterically activated by HslU binding. In terms of biological role, protease subunit of a proteasome-like degradation complex believed to be a general protein degrading machinery. This chain is ATP-dependent protease subunit HslV, found in Methylorubrum extorquens (strain CM4 / NCIMB 13688) (Methylobacterium extorquens).